A 170-amino-acid polypeptide reads, in one-letter code: Flavin reductase (NADPH) (170 aa).

This sequence belongs to the non-flavoprotein flavin reductase family.

The catalysed reaction is reduced riboflavin + NADP(+) = riboflavin + NADPH + 2 H(+). Its function is as follows. Catalyzes the NADH-dependent reduction of FAD to provide FADH2 for the halogenase RebH. The polypeptide is Flavin reductase (NADPH) (rbmH) (Lentzea aerocolonigenes (Lechevalieria aerocolonigenes)).